A 287-amino-acid chain; its full sequence is Phosphatidylserine decarboxylase proenzyme (287 aa).

Catalysis depends on charge relay system; for autoendoproteolytic cleavage activity residues aspartate 90, histidine 147, and serine 253. Residue serine 253 is the Schiff-base intermediate with substrate; via pyruvic acid; for decarboxylase activity of the active site. Serine 253 is modified (pyruvic acid (Ser); by autocatalysis).

It belongs to the phosphatidylserine decarboxylase family. PSD-B subfamily. Prokaryotic type I sub-subfamily. Heterodimer of a large membrane-associated beta subunit and a small pyruvoyl-containing alpha subunit. Pyruvate serves as cofactor. In terms of processing, is synthesized initially as an inactive proenzyme. Formation of the active enzyme involves a self-maturation process in which the active site pyruvoyl group is generated from an internal serine residue via an autocatalytic post-translational modification. Two non-identical subunits are generated from the proenzyme in this reaction, and the pyruvate is formed at the N-terminus of the alpha chain, which is derived from the carboxyl end of the proenzyme. The autoendoproteolytic cleavage occurs by a canonical serine protease mechanism, in which the side chain hydroxyl group of the serine supplies its oxygen atom to form the C-terminus of the beta chain, while the remainder of the serine residue undergoes an oxidative deamination to produce ammonia and the pyruvoyl prosthetic group on the alpha chain. During this reaction, the Ser that is part of the protease active site of the proenzyme becomes the pyruvoyl prosthetic group, which constitutes an essential element of the active site of the mature decarboxylase.

Its subcellular location is the cell membrane. It carries out the reaction a 1,2-diacyl-sn-glycero-3-phospho-L-serine + H(+) = a 1,2-diacyl-sn-glycero-3-phosphoethanolamine + CO2. Its pathway is phospholipid metabolism; phosphatidylethanolamine biosynthesis; phosphatidylethanolamine from CDP-diacylglycerol: step 2/2. Its function is as follows. Catalyzes the formation of phosphatidylethanolamine (PtdEtn) from phosphatidylserine (PtdSer). This Aliivibrio fischeri (strain MJ11) (Vibrio fischeri) protein is Phosphatidylserine decarboxylase proenzyme.